The following is a 154-amino-acid chain: 3-hydroxyacyl-[acyl-carrier-protein] dehydratase FabZ (154 aa).

The active site involves His54.

The protein belongs to the thioester dehydratase family. FabZ subfamily.

The protein resides in the cytoplasm. The enzyme catalyses a (3R)-hydroxyacyl-[ACP] = a (2E)-enoyl-[ACP] + H2O. Functionally, involved in unsaturated fatty acids biosynthesis. Catalyzes the dehydration of short chain beta-hydroxyacyl-ACPs and long chain saturated and unsaturated beta-hydroxyacyl-ACPs. This chain is 3-hydroxyacyl-[acyl-carrier-protein] dehydratase FabZ, found in Shewanella sp. (strain MR-4).